Reading from the N-terminus, the 347-residue chain is Gamma-glutamyl hydrolase 2 (347 aa).

The N-terminal stretch at 1–22 (MWSYVWLPLVALSLFKDSIIMA) is a signal peptide. The region spanning 45-341 (APDPNLNYRP…IGYDEVYIFT (297 aa)) is the Gamma-glutamyl hydrolase domain. C155 (nucleophile) is an active-site residue. Residue H268 is the Proton donor of the active site.

Belongs to the peptidase C26 family. As to expression, expressed in roots, in leaves, stems and siliques.

Its subcellular location is the vacuole. It is found in the secreted. The protein localises to the extracellular space. The protein resides in the cell wall. The enzyme catalyses (6S)-5,6,7,8-tetrahydrofolyl-(gamma-L-Glu)(n) + (n-1) H2O = (6S)-5,6,7,8-tetrahydrofolate + (n-1) L-glutamate. Cleaves the polyglutamate sidechains of folate polyglutamates in the vacuole. Is important for polyglutamyl tail length determination before vacuolar exit. Plays a role on folate stability and intracellular folate content. Has endopeptidase activity against 4-amino-10-methylpteroyl penta-, tetra-, tri- and di-gamma-L-glutamate substrates and is responsible for the production of folic acid, also called pteroylglutamic acid (PteGlu) from teroylpolyglutamates. In Arabidopsis thaliana (Mouse-ear cress), this protein is Gamma-glutamyl hydrolase 2 (GGH2).